The sequence spans 684 residues: Kinesin-like protein KIN-13B (684 aa).

Disordered regions lie at residues 1–31 (MSGR…SNGR) and 71–103 (GNEF…SPGL). Composition is skewed to polar residues over residues 18-31 (LSDN…SNGR) and 79-91 (TTPQ…TNQR). Positions 169-492 (KIKVVVRKRP…LRYADRVKSL (324 aa)) constitute a Kinesin motor domain. Residue 258–265 (GQTGSGKT) participates in ATP binding. The interval 574–594 (KPTIQMKSRDMPRPDMKKSNS) is disordered. The segment covering 580–594 (KSRDMPRPDMKKSNS) has biased composition (basic and acidic residues). Residues 596-626 (DNLNALLQEEEDLVNAHRKQVEDTMNIVKEE) are a coiled coil.

The protein belongs to the TRAFAC class myosin-kinesin ATPase superfamily. Kinesin family. KIN-13 subfamily.

Its function is as follows. Acts redundantly with KIN13A to modulate cell wall synthesis and cell expansion via the THE1 pathway. This chain is Kinesin-like protein KIN-13B, found in Arabidopsis thaliana (Mouse-ear cress).